The sequence spans 281 residues: Nucleotide-binding protein MADE_1004170 (281 aa).

8–15 contacts ATP; the sequence is GRSGSGKS. 56–59 is a binding site for GTP; that stretch reads DVRN.

This sequence belongs to the RapZ-like family.

Its function is as follows. Displays ATPase and GTPase activities. In Alteromonas mediterranea (strain DSM 17117 / CIP 110805 / LMG 28347 / Deep ecotype), this protein is Nucleotide-binding protein MADE_1004170.